Reading from the N-terminus, the 321-residue chain is Lipoyl synthase (321 aa).

Cys68, Cys73, Cys79, Cys94, Cys98, Cys101, and Ser308 together coordinate [4Fe-4S] cluster. One can recognise a Radical SAM core domain in the interval 80-297; it reads FNHGTATFMI…KEQALAMGFT (218 aa).

It belongs to the radical SAM superfamily. Lipoyl synthase family. It depends on [4Fe-4S] cluster as a cofactor.

The protein localises to the cytoplasm. The catalysed reaction is [[Fe-S] cluster scaffold protein carrying a second [4Fe-4S](2+) cluster] + N(6)-octanoyl-L-lysyl-[protein] + 2 oxidized [2Fe-2S]-[ferredoxin] + 2 S-adenosyl-L-methionine + 4 H(+) = [[Fe-S] cluster scaffold protein] + N(6)-[(R)-dihydrolipoyl]-L-lysyl-[protein] + 4 Fe(3+) + 2 hydrogen sulfide + 2 5'-deoxyadenosine + 2 L-methionine + 2 reduced [2Fe-2S]-[ferredoxin]. It participates in protein modification; protein lipoylation via endogenous pathway; protein N(6)-(lipoyl)lysine from octanoyl-[acyl-carrier-protein]: step 2/2. In terms of biological role, catalyzes the radical-mediated insertion of two sulfur atoms into the C-6 and C-8 positions of the octanoyl moiety bound to the lipoyl domains of lipoate-dependent enzymes, thereby converting the octanoylated domains into lipoylated derivatives. The chain is Lipoyl synthase from Proteus mirabilis (strain HI4320).